A 591-amino-acid chain; its full sequence is Probable metalloprotease ARX1 (591 aa).

This sequence belongs to the peptidase M24 family. As to quaternary structure, component of the nucleoplasmic and cytoplasmic pre-60S ribosomal particles.

Its subcellular location is the cytoplasm. It localises to the nucleus. Probable metalloprotease involved in proper assembly of pre-ribosomal particles during the biogenesis of the 60S ribosomal subunit. Accompanies the pre-60S particles to the cytoplasm. The polypeptide is Probable metalloprotease ARX1 (ARX1) (Eremothecium gossypii (strain ATCC 10895 / CBS 109.51 / FGSC 9923 / NRRL Y-1056) (Yeast)).